Here is a 483-residue protein sequence, read N- to C-terminus: Regulatory protein ViaA (483 aa).

The protein belongs to the ViaA family. Homodimer. Interacts with RavA.

The protein localises to the cytoplasm. Its function is as follows. Component of the RavA-ViaA chaperone complex, which may act on the membrane to optimize the function of some of the respiratory chains. ViaA stimulates the ATPase activity of RavA. In Enterobacter sp. (strain 638), this protein is Regulatory protein ViaA.